The sequence spans 31 residues: Cytochrome b6-f complex subunit 6 (31 aa).

The chain crosses the membrane as a helical span at residues 4–24 (LTSYFGFLLAALTITLALFIG).

This sequence belongs to the PetL family. The 4 large subunits of the cytochrome b6-f complex are cytochrome b6, subunit IV (17 kDa polypeptide, PetD), cytochrome f and the Rieske protein, while the 4 small subunits are PetG, PetL, PetM and PetN. The complex functions as a dimer.

The protein resides in the plastid. It localises to the chloroplast thylakoid membrane. Functionally, component of the cytochrome b6-f complex, which mediates electron transfer between photosystem II (PSII) and photosystem I (PSI), cyclic electron flow around PSI, and state transitions. PetL is important for photoautotrophic growth as well as for electron transfer efficiency and stability of the cytochrome b6-f complex. The chain is Cytochrome b6-f complex subunit 6 from Triticum aestivum (Wheat).